An 83-amino-acid polypeptide reads, in one-letter code: Mu-theraphotoxin-Hhn2b 3 (83 aa).

The N-terminal stretch at 1 to 21 (MKASMFLALAGLVLLFVVCYA) is a signal peptide. Residues 22–48 (SESEEKEFPRELISKIFAVDDFKGEVR) constitute a propeptide that is removed on maturation. Intrachain disulfides connect C50/C65, C57/C70, and C64/C77. L81 carries the leucine amide modification.

This sequence belongs to the neurotoxin 10 (Hwtx-1) family. 14 (Hntx-1) subfamily. In terms of assembly, monomer. Expressed by the venom gland.

The protein resides in the secreted. Functionally, weakly blocks the rat SCN2A/SCN1B (Nav1.2/beta-1) sodium channel (IC(50)=68 uM) and the insect sodium channel para/tipE (IC(50)=4.3 uM), without altering the activation or inactivation kinetics (depressant toxin). The protein is Mu-theraphotoxin-Hhn2b 3 of Cyriopagopus hainanus (Chinese bird spider).